The following is a 511-amino-acid chain: Glucan endo-1,3-beta-glucosidase 1 (511 aa).

The signal sequence occupies residues 1–28; sequence MAFTSMVSTVPVLFFFFTLLLISANSSS. Residue asparagine 109 is glycosylated (N-linked (GlcNAc...) asparagine). The Proton donor role is filled by glutamate 137. Asparagine 192 and asparagine 274 each carry an N-linked (GlcNAc...) asparagine glycan. Catalysis depends on glutamate 284, which acts as the Nucleophile. N-linked (GlcNAc...) asparagine glycosylation is found at asparagine 374, asparagine 378, asparagine 407, asparagine 473, and asparagine 480. Cysteine 382 and cysteine 445 are joined by a disulfide. A lipid anchor (GPI-anchor amidated alanine) is attached at alanine 485. Residues 486–511 constitute a propeptide, removed in mature form; that stretch reads AGEATSRSLSRGFCVTIMILVTFSIL.

It belongs to the glycosyl hydrolase 17 family. Post-translationally, contains two additional disulfide bonds.

Its subcellular location is the cell membrane. The catalysed reaction is Hydrolysis of (1-&gt;3)-beta-D-glucosidic linkages in (1-&gt;3)-beta-D-glucans.. This chain is Glucan endo-1,3-beta-glucosidase 1, found in Arabidopsis thaliana (Mouse-ear cress).